Consider the following 73-residue polypeptide: Carboxysome shell vertex protein CsoS4B (73 aa).

The region spanning 1–68 is the BMV domain; it reads MVCTQRVAGL…TDLTIGGIID (68 aa).

This sequence belongs to the CcmL/EutN family. CsoS4 subfamily. In terms of assembly, homopentamer.

It localises to the carboxysome. In terms of biological role, probably forms vertices in the carboxysome, a polyhedral inclusion where RuBisCO (ribulose bisphosphate carboxylase, cbbL-cbbS) is sequestered. Has been modeled to induce curvature upon insertion into an otherwise flat hexagonal layer of major carboxysome subunits. Has not been identified in purified carboxysomes; it is expected to be present in very low amounts. The sequence is that of Carboxysome shell vertex protein CsoS4B from Prochlorococcus marinus subsp. pastoris (strain CCMP1986 / NIES-2087 / MED4).